We begin with the raw amino-acid sequence, 384 residues long: S-adenosylmethionine synthase (384 aa).

ATP is bound at residue histidine 15. A Mg(2+)-binding site is contributed by aspartate 17. Glutamate 43 serves as a coordination point for K(+). L-methionine contacts are provided by glutamate 56 and glutamine 99. The tract at residues 99 to 109 (QSPDINQGVDR) is flexible loop. ATP is bound by residues 164–166 (DAK), 230–231 (RF), aspartate 239, 245–246 (RK), alanine 262, and lysine 266. Residue aspartate 239 coordinates L-methionine. L-methionine is bound at residue lysine 270.

Belongs to the AdoMet synthase family. In terms of assembly, homotetramer; dimer of dimers. It depends on Mg(2+) as a cofactor. Requires K(+) as cofactor.

It localises to the cytoplasm. The catalysed reaction is L-methionine + ATP + H2O = S-adenosyl-L-methionine + phosphate + diphosphate. It functions in the pathway amino-acid biosynthesis; S-adenosyl-L-methionine biosynthesis; S-adenosyl-L-methionine from L-methionine: step 1/1. Its function is as follows. Catalyzes the formation of S-adenosylmethionine (AdoMet) from methionine and ATP. The overall synthetic reaction is composed of two sequential steps, AdoMet formation and the subsequent tripolyphosphate hydrolysis which occurs prior to release of AdoMet from the enzyme. This chain is S-adenosylmethionine synthase, found in Escherichia fergusonii (strain ATCC 35469 / DSM 13698 / CCUG 18766 / IAM 14443 / JCM 21226 / LMG 7866 / NBRC 102419 / NCTC 12128 / CDC 0568-73).